The chain runs to 140 residues: 3-hydroxyacyl-[acyl-carrier-protein] dehydratase FabZ (140 aa).

Residue His-48 is part of the active site.

It belongs to the thioester dehydratase family. FabZ subfamily.

It is found in the cytoplasm. It catalyses the reaction a (3R)-hydroxyacyl-[ACP] = a (2E)-enoyl-[ACP] + H2O. Functionally, involved in unsaturated fatty acids biosynthesis. Catalyzes the dehydration of short chain beta-hydroxyacyl-ACPs and long chain saturated and unsaturated beta-hydroxyacyl-ACPs. This Caldicellulosiruptor saccharolyticus (strain ATCC 43494 / DSM 8903 / Tp8T 6331) protein is 3-hydroxyacyl-[acyl-carrier-protein] dehydratase FabZ.